We begin with the raw amino-acid sequence, 153 residues long: Antibacterial peptide PMAP-23 (153 aa).

An N-terminal signal peptide occupies residues 1–29 (METQRASLCLGRWSLWLLLLGLVVPSASA). A Pyrrolidone carboxylic acid modification is found at Gln-30. Residues 30–130 (QALSYREAVL…DITCNQLQSV (101 aa)) constitute a propeptide that is removed on maturation. Residues 61-80 (DQPPKADEDPGTPKPVSFTV) form a disordered region. 2 disulfide bridges follow: Cys-85-Cys-96 and Cys-107-Cys-124.

This sequence belongs to the cathelicidin family.

It is found in the secreted. In terms of biological role, exerts antimicrobial activity against both Gram-positive and negative bacteria at concentrations of 2-16 micro molar. Its activity appears to be mediated by its ability to damage bacterial membranes. This chain is Antibacterial peptide PMAP-23 (PMAP23), found in Sus scrofa (Pig).